We begin with the raw amino-acid sequence, 2517 residues long: Non-reducing polyketide synthase pkbA (2517 aa).

The tract at residues 59–250 (LERVAGPAEK…KRFDLRGRFH (192 aa)) is N-terminal acylcarrier protein transacylase domain (SAT). Residues 380-775 (SEPIAIIGMG…SANTVSSLKE (396 aa)) form the Ketosynthase family 3 (KS3) domain. Catalysis depends on for beta-ketoacyl synthase activity residues cysteine 547, histidine 682, and histidine 721. The malonyl-CoA:ACP transacylase (MAT) domain stretch occupies residues 849–1158 (AFGGQVARSV…TGTAALADAT (310 aa)). Serine 935 (for acyl/malonyl transferase activity) is an active-site residue. Positions 1221–1353 (EEFLTFVKYK…GTVVLRENDT (133 aa)) are N-terminal hotdog fold. One can recognise a PKS/mFAS DH domain in the interval 1221-1530 (EEFLTFVKYK…FTRVQISSLG (310 aa)). The product template (PT) domain stretch occupies residues 1251–1525 (FVKGHAVLAE…ILGAHFTRVQ (275 aa)). The Proton acceptor; for dehydratase activity role is filled by histidine 1255. The C-terminal hotdog fold stretch occupies residues 1379–1530 (DCHILQGPVV…FTRVQISSLG (152 aa)). Residue aspartate 1437 is the Proton donor; for dehydratase activity of the active site. The region spanning 1574 to 1651 (RPTLEISEKL…SISKCLASYL (78 aa)) is the Carrier 1 domain. Residue serine 1611 is modified to O-(pantetheine 4'-phosphoryl)serine. Positions 1659–1684 (QPEDLADADSVESDSDMPTGAVTSGI) are disordered. Over residues 1662–1673 (DLADADSVESDS) the composition is skewed to acidic residues. The 77-residue stretch at 1685–1761 (TTPDDAVSRL…DLIALVPALN (77 aa)) folds into the Carrier 2 domain. At serine 1721 the chain carries O-(pantetheine 4'-phosphoryl)serine. The interval 1976–2075 (LELGGGTGGT…IHRMLRPDGF (100 aa)) is methyltransferase (CMeT) domain. Positions 2200-2514 (LMIHGGGHIM…RGYDFLKEEV (315 aa)) are thioesterase (TE) domain.

It depends on pantetheine 4'-phosphate as a cofactor.

The catalysed reaction is 3 malonyl-CoA + acetyl-CoA + S-adenosyl-L-methionine + H(+) = 3-methylorsellinate + S-adenosyl-L-homocysteine + 3 CO2 + 4 CoA. It functions in the pathway phytotoxin biosynthesis. Its function is as follows. Non-reducing polyketide synthase; part of the gene cluster that mediates the biosynthesis of cichorine, a phytotoxin active against knapweed, corn, and soybeans. The first step in the pathway is performed by the non-reducing polyketide synthase pkbA that condenses one acetyl-CoA starter unit with 3 malonyl-CoA units. PkbA also catalyzes one methylation step to produce 3-methylorsellinate. The nonribosomal peptide synthase-like protein cicB, the cytochrome P450 monooxygenase cicH and the O-methyltransferase cicE are involved in the conversion of 3-methylorsellinate into nidulol. CicB converts 3-methylorsellinate to a yet unidentified intermediate, cicH may play a ring-closing role for cichorine and cicE is plausibly responsible for the methylation of one of the phenol groups. The oxidoreductase cicC acts downstream with still unidentified enzymes to further convert nidulol into cichorin. This is Non-reducing polyketide synthase pkbA from Emericella nidulans (strain FGSC A4 / ATCC 38163 / CBS 112.46 / NRRL 194 / M139) (Aspergillus nidulans).